The sequence spans 366 residues: DNA integrity scanning protein DisA (366 aa).

The 139-residue stretch at 21 to 159 (VHTLKGTLQR…EGKAHMLEQP (139 aa)) folds into the DAC domain. ATP is bound by residues Gly88, Leu106, and 119–123 (TRHRS).

It belongs to the DisA family. In terms of assembly, homooctamer. Mg(2+) serves as cofactor.

The enzyme catalyses 2 ATP = 3',3'-c-di-AMP + 2 diphosphate. In terms of biological role, participates in a DNA-damage check-point. DisA forms globular foci that rapidly scan along the chromosomes searching for lesions. Functionally, also has diadenylate cyclase activity, catalyzing the condensation of 2 ATP molecules into cyclic di-AMP (c-di-AMP). c-di-AMP likely acts as a signaling molecule that may couple DNA integrity with a cellular process. The sequence is that of DNA integrity scanning protein DisA from Corynebacterium glutamicum (strain R).